Here is a 230-residue protein sequence, read N- to C-terminus: Phosphoglycolate phosphatase (230 aa).

Asp-9 acts as the Nucleophile in catalysis. Asp-9, Asp-11, and Asp-175 together coordinate Mg(2+).

This sequence belongs to the HAD-like hydrolase superfamily. CbbY/CbbZ/Gph/YieH family. It depends on Mg(2+) as a cofactor.

The enzyme catalyses 2-phosphoglycolate + H2O = glycolate + phosphate. The protein operates within organic acid metabolism; glycolate biosynthesis; glycolate from 2-phosphoglycolate: step 1/1. Its function is as follows. Specifically catalyzes the dephosphorylation of 2-phosphoglycolate. Is involved in the dissimilation of the intracellular 2-phosphoglycolate formed during the DNA repair of 3'-phosphoglycolate ends, a major class of DNA lesions induced by oxidative stress. The sequence is that of Phosphoglycolate phosphatase from Psychrobacter arcticus (strain DSM 17307 / VKM B-2377 / 273-4).